Here is a 938-residue protein sequence, read N- to C-terminus: Isoleucine--tRNA ligase (938 aa).

The 'HIGH' region signature appears at 58-68 (PYANGSIHIGH). Lys-183 is subject to N6-acetyllysine. Residue Glu-561 participates in L-isoleucyl-5'-AMP binding. The 'KMSKS' region motif lies at 602-606 (KMSKS). Lys-605 contributes to the ATP binding site. Zn(2+) is bound by residues Cys-901, Cys-904, Cys-921, and Cys-924.

The protein belongs to the class-I aminoacyl-tRNA synthetase family. IleS type 1 subfamily. Monomer. The cofactor is Zn(2+).

Its subcellular location is the cytoplasm. The enzyme catalyses tRNA(Ile) + L-isoleucine + ATP = L-isoleucyl-tRNA(Ile) + AMP + diphosphate. In terms of biological role, catalyzes the attachment of isoleucine to tRNA(Ile). As IleRS can inadvertently accommodate and process structurally similar amino acids such as valine, to avoid such errors it has two additional distinct tRNA(Ile)-dependent editing activities. One activity is designated as 'pretransfer' editing and involves the hydrolysis of activated Val-AMP. The other activity is designated 'posttransfer' editing and involves deacylation of mischarged Val-tRNA(Ile). The polypeptide is Isoleucine--tRNA ligase (Escherichia coli O6:H1 (strain CFT073 / ATCC 700928 / UPEC)).